The sequence spans 482 residues: Alpha-ketoglutarate semialdehyde dehydrogenase (482 aa).

A disordered region spans residues 1-28 (MTDPSKNYVNGEWVTSETGETTEVTNPA). Positions 11–25 (GEWVTSETGETTEVT) are enriched in low complexity. Residue C284 is part of the active site.

It belongs to the aldehyde dehydrogenase family. As to quaternary structure, homotetramer.

It catalyses the reaction 2,5-dioxopentanoate + NADP(+) + H2O = 2-oxoglutarate + NADPH + 2 H(+). The protein operates within carbohydrate metabolism; D-xylose degradation. Functionally, alpha-ketoglutarate semialdehyde dehydrogenase involved in the degradation of D-xylose, a major component of hemicelluloses such as xylan. Catalyzes the fifth reaction in the xylose utilization pathway through dehydratation of alpha-ketoglutarate semialdehyde (2,5-dioxopentanoate) into alpha-ketoglutarate. This is Alpha-ketoglutarate semialdehyde dehydrogenase from Haloferax volcanii (strain ATCC 29605 / DSM 3757 / JCM 8879 / NBRC 14742 / NCIMB 2012 / VKM B-1768 / DS2) (Halobacterium volcanii).